Reading from the N-terminus, the 113-residue chain is uncharacterized protein (113 aa).

The region spanning Thr16–Asn113 is the HTH hxlR-type domain.

This is an uncharacterized protein from Halalkalibacterium halodurans (strain ATCC BAA-125 / DSM 18197 / FERM 7344 / JCM 9153 / C-125) (Bacillus halodurans).